The sequence spans 711 residues: Polyribonucleotide nucleotidyltransferase (711 aa).

Asp486 and Asp492 together coordinate Mg(2+). Residues 553–612 enclose the KH domain; that stretch reads PRIHTIKINPDKIKDVIGKGGSVIRALTEETGTTIEIEDDGTVKIAATDGDKAQHAIRRI. Residues 622 to 690 form the S1 motif domain; sequence GRIYNGKVTR…RQGRVRLSIK (69 aa). The tract at residues 689 to 711 is disordered; that stretch reads IKEATEQTPSAAAPEAPAAEQGE. The segment covering 694–711 has biased composition (low complexity); that stretch reads EQTPSAAAPEAPAAEQGE.

The protein belongs to the polyribonucleotide nucleotidyltransferase family. As to quaternary structure, component of the RNA degradosome, which is a multiprotein complex involved in RNA processing and mRNA degradation. Mg(2+) serves as cofactor.

It is found in the cytoplasm. The enzyme catalyses RNA(n+1) + phosphate = RNA(n) + a ribonucleoside 5'-diphosphate. Its function is as follows. Involved in mRNA degradation. Catalyzes the phosphorolysis of single-stranded polyribonucleotides processively in the 3'- to 5'-direction. This chain is Polyribonucleotide nucleotidyltransferase, found in Klebsiella pneumoniae subsp. pneumoniae (strain ATCC 700721 / MGH 78578).